A 276-amino-acid chain; its full sequence is Dermonecrotic toxin LlSicTox-alphaIV2i (276 aa).

His5 is an active-site residue. 2 residues coordinate Mg(2+): Glu25 and Asp27. The active-site Nucleophile is His41. Disulfide bonds link Cys45–Cys51 and Cys47–Cys193. Asp85 is a Mg(2+) binding site.

It belongs to the arthropod phospholipase D family. Class II subfamily. Mg(2+) serves as cofactor. As to expression, expressed by the venom gland.

It is found in the secreted. The catalysed reaction is an N-(acyl)-sphingosylphosphocholine = an N-(acyl)-sphingosyl-1,3-cyclic phosphate + choline. The enzyme catalyses an N-(acyl)-sphingosylphosphoethanolamine = an N-(acyl)-sphingosyl-1,3-cyclic phosphate + ethanolamine. It catalyses the reaction a 1-acyl-sn-glycero-3-phosphocholine = a 1-acyl-sn-glycero-2,3-cyclic phosphate + choline. It carries out the reaction a 1-acyl-sn-glycero-3-phosphoethanolamine = a 1-acyl-sn-glycero-2,3-cyclic phosphate + ethanolamine. In terms of biological role, dermonecrotic toxins cleave the phosphodiester linkage between the phosphate and headgroup of certain phospholipids (sphingolipid and lysolipid substrates), forming an alcohol (often choline) and a cyclic phosphate. This toxin acts on sphingomyelin (SM). It may also act on ceramide phosphoethanolamine (CPE), lysophosphatidylcholine (LPC) and lysophosphatidylethanolamine (LPE), but not on lysophosphatidylserine (LPS), and lysophosphatidylglycerol (LPG). It acts by transphosphatidylation, releasing exclusively cyclic phosphate products as second products. Induces dermonecrosis, hemolysis, increased vascular permeability, edema, inflammatory response, and platelet aggregation. In Loxosceles laeta (South American recluse spider), this protein is Dermonecrotic toxin LlSicTox-alphaIV2i.